The primary structure comprises 488 residues: Aspartyl/glutamyl-tRNA(Asn/Gln) amidotransferase subunit B (488 aa).

This sequence belongs to the GatB/GatE family. GatB subfamily. In terms of assembly, heterotrimer of A, B and C subunits.

It catalyses the reaction L-glutamyl-tRNA(Gln) + L-glutamine + ATP + H2O = L-glutaminyl-tRNA(Gln) + L-glutamate + ADP + phosphate + H(+). The catalysed reaction is L-aspartyl-tRNA(Asn) + L-glutamine + ATP + H2O = L-asparaginyl-tRNA(Asn) + L-glutamate + ADP + phosphate + 2 H(+). Functionally, allows the formation of correctly charged Asn-tRNA(Asn) or Gln-tRNA(Gln) through the transamidation of misacylated Asp-tRNA(Asn) or Glu-tRNA(Gln) in organisms which lack either or both of asparaginyl-tRNA or glutaminyl-tRNA synthetases. The reaction takes place in the presence of glutamine and ATP through an activated phospho-Asp-tRNA(Asn) or phospho-Glu-tRNA(Gln). The polypeptide is Aspartyl/glutamyl-tRNA(Asn/Gln) amidotransferase subunit B (Chlamydia trachomatis serovar A (strain ATCC VR-571B / DSM 19440 / HAR-13)).